Consider the following 537-residue polypeptide: Cytoplasmic 60S subunit biogenesis factor REI1 homolog (537 aa).

2 consecutive C2H2-type zinc fingers follow at residues 18–42 (YTCN…SDWH) and 83–107 (KTCE…STKH). Disordered stretches follow at residues 101-151 (HLSS…AEEE) and 163-204 (SIHD…PEAL). Low complexity predominate over residues 192–204 (EETPTTTPKPEAL). The segment at 260-284 (NECLTCGKMKVNVFAIQTHMRDKSH) adopts a C2H2-type 3 zinc-finger fold. Over residues 312–322 (DWETEEEDKGE) the composition is skewed to acidic residues. Disordered regions lie at residues 312-361 (DWET…ASSL) and 382-401 (GKHP…ADGI). Positions 323 to 339 (EDGGVRLGAKRESKVVD) are enriched in basic and acidic residues. Over residues 340–356 (ENGDEVMEDEEGWETDS) the composition is skewed to acidic residues. Residues 383–395 (KHPHHSRENKKAH) show a composition bias toward basic residues.

This sequence belongs to the REI1 family. As to quaternary structure, associates with nascent pre-60S particles that have not yet entered the translating pool, and is released from mature 60S subunits.

Its subcellular location is the cytoplasm. Its function is as follows. Pre-60S-associated factor involved in the cytoplasmic maturation of the 60S subunit. Involved in the dissociation and recycling of other late pre-60S factors before newly synthesized large ribosomal subunits enter translation. This Chaetomium thermophilum (strain DSM 1495 / CBS 144.50 / IMI 039719) (Thermochaetoides thermophila) protein is Cytoplasmic 60S subunit biogenesis factor REI1 homolog.